The sequence spans 265 residues: Cytosolic Fe-S cluster assembly factor NUBP2 homolog (265 aa).

Residue 22–29 (GKGGVGKS) coordinates ATP. Cys196 and Cys199 together coordinate [4Fe-4S] cluster.

This sequence belongs to the Mrp/NBP35 ATP-binding proteins family. NUBP2/CFD1 subfamily. Heterotetramer of 2 NUBP1 and 2 NUBP2 chains. Requires [4Fe-4S] cluster as cofactor.

The protein resides in the cytoplasm. Component of the cytosolic iron-sulfur (Fe/S) protein assembly (CIA) machinery. Required for maturation of extramitochondrial Fe-S proteins. The NUBP1-NUBP2 heterotetramer forms a Fe-S scaffold complex, mediating the de novo assembly of an Fe-S cluster and its transfer to target apoproteins. The chain is Cytosolic Fe-S cluster assembly factor NUBP2 homolog from Trichoplax adhaerens (Trichoplax reptans).